We begin with the raw amino-acid sequence, 463 residues long: Kynureninase 2 (463 aa).

Pyridoxal 5'-phosphate contacts are provided by residues Leu134, Thr135, 162–165 (FPSD), Asp247, His250, and Tyr272. Lys273 bears the N6-(pyridoxal phosphate)lysine mark. Pyridoxal 5'-phosphate is bound by residues Trp312 and Asn340.

The protein belongs to the kynureninase family. As to quaternary structure, homodimer. Pyridoxal 5'-phosphate is required as a cofactor.

Its subcellular location is the cytoplasm. The catalysed reaction is L-kynurenine + H2O = anthranilate + L-alanine + H(+). The enzyme catalyses 3-hydroxy-L-kynurenine + H2O = 3-hydroxyanthranilate + L-alanine + H(+). Its pathway is amino-acid degradation; L-kynurenine degradation; L-alanine and anthranilate from L-kynurenine: step 1/1. It functions in the pathway cofactor biosynthesis; NAD(+) biosynthesis; quinolinate from L-kynurenine: step 2/3. Functionally, catalyzes the cleavage of L-kynurenine (L-Kyn) and L-3-hydroxykynurenine (L-3OHKyn) into anthranilic acid (AA) and 3-hydroxyanthranilic acid (3-OHAA), respectively. The protein is Kynureninase 2 (bna5-2) of Aspergillus niger (strain ATCC MYA-4892 / CBS 513.88 / FGSC A1513).